Here is a 168-residue protein sequence, read N- to C-terminus: Thiol peroxidase (168 aa).

The 150-residue stretch at 19-168 (PQAGSKAQTF…YEAALAVLKA (150 aa)) folds into the Thioredoxin domain. Cys-61 serves as the catalytic Cysteine sulfenic acid (-SOH) intermediate. Cys-61 and Cys-95 form a disulfide bridge.

This sequence belongs to the peroxiredoxin family. Tpx subfamily. As to quaternary structure, homodimer.

It catalyses the reaction a hydroperoxide + [thioredoxin]-dithiol = an alcohol + [thioredoxin]-disulfide + H2O. In terms of biological role, thiol-specific peroxidase that catalyzes the reduction of hydrogen peroxide and organic hydroperoxides to water and alcohols, respectively. Plays a role in cell protection against oxidative stress by detoxifying peroxides. The polypeptide is Thiol peroxidase (Shigella dysenteriae).